The sequence spans 147 residues: Phospholipase A2-beta (147 aa).

The first 28 residues, 1 to 28 (MMFRTSLMRFAAAFFAIVFVVLVGVARS), serve as a signal peptide directing secretion. Disulfide bonds link Cys-31–Cys-58, Cys-35–Cys-64, Cys-40–Cys-117, Cys-51–Cys-71, Cys-70–Cys-95, and Cys-77–Cys-88. Ca(2+) is bound by residues Tyr-50, Gly-52, and His-55. The active site involves His-74. Asp-75 provides a ligand contact to Ca(2+). Residues 144–147 (KTEL) carry the Prevents secretion from ER motif.

It belongs to the phospholipase A2 family. The cofactor is Ca(2+). Ubiquitous but expressed at a low level. Detected in vascular tissues and in the guard cells. Predominantly detected in pollen.

Its subcellular location is the secreted. The protein resides in the endoplasmic reticulum. It catalyses the reaction a 1,2-diacyl-sn-glycero-3-phosphocholine + H2O = a 1-acyl-sn-glycero-3-phosphocholine + a fatty acid + H(+). With respect to regulation, inhibited by aristolochic acid. PA2 catalyzes the calcium-dependent hydrolysis of the 2-acyl groups in 3-sn-phosphoglycerides. Releases lysophospholipids (LPLs) and free fatty acids (FFAs) from membrane phospholipids in response to hormones and other external stimuli. Regulates the process of cell elongation and plays important roles in shoot gravitropism by mediating auxin-induced cell elongation. Involved in stomatal opening in response to light. Plays a role in pollen development and germination and tube growth. In Arabidopsis thaliana (Mouse-ear cress), this protein is Phospholipase A2-beta (PLA2-BETA).